The chain runs to 232 residues: Movement and silencing protein TGBp1 (232 aa).

The 117-residue stretch at 1–117 folds into the (+)RNA virus helicase ATP-binding domain; it reads MDVLINKLAS…GPGIVADFVC (117 aa). A (+)RNA virus helicase C-terminal domain is found at 118-232; sequence NKTKRFGSST…ACPDATFAPS (115 aa).

Belongs to the Tymovirales TGBp1 protein family. As to quaternary structure, homodimer and homooligomer. Interacts with capsid protein. Interacts with host AGO1; this interaction targets the host protein for degradation, thereby suppressing the antiviral RNA silencing.

Its subcellular location is the host cytoplasm. Functionally, transports viral genome to neighboring plant cells directly through plasmosdesmata, without any budding. The movement protein allows efficient cell to cell propagation, by bypassing the host cell wall barrier. Increases plasmodesma size exclusion limit. Acts as a suppressor of RNA-mediated gene silencing, also known as post-transcriptional gene silencing (PTGS), a mechanism of plant viral defense that limits the accumulation of viral RNAs. The protein is Movement and silencing protein TGBp1 of Populus balsamifera (Balsam poplar).